A 70-amino-acid chain; its full sequence is uncharacterized protein (70 aa).

The helical transmembrane segment at 15–37 (LLVSSISESAVALIIITIRILFS) threads the bilayer.

The protein resides in the membrane. This is an uncharacterized protein from Saccharomyces cerevisiae (strain ATCC 204508 / S288c) (Baker's yeast).